Reading from the N-terminus, the 293-residue chain is NAD kinase (293 aa).

The active-site Proton acceptor is the D72. NAD(+)-binding positions include 72-73 (DG), 146-147 (ND), R157, K174, D176, 187-192 (TAYALS), and Q247.

The protein belongs to the NAD kinase family. It depends on a divalent metal cation as a cofactor.

It is found in the cytoplasm. The enzyme catalyses NAD(+) + ATP = ADP + NADP(+) + H(+). Its function is as follows. Involved in the regulation of the intracellular balance of NAD and NADP, and is a key enzyme in the biosynthesis of NADP. Catalyzes specifically the phosphorylation on 2'-hydroxyl of the adenosine moiety of NAD to yield NADP. The chain is NAD kinase from Marinomonas sp. (strain MWYL1).